The chain runs to 63 residues: Cytochrome b-c1 complex subunit 9 (63 aa).

Residues 2–21 (AAATLTSKLYSLLFRRTSTF) are Mitochondrial matrix-facing. A helical membrane pass occupies residues 22-47 (ALTIIVGVMFFERAFDQGADAIYDHI). Topologically, residues 48–63 (NEGKLWKHIKHKYENK) are mitochondrial intermembrane.

This sequence belongs to the UQCR10/QCR9 family. As to quaternary structure, component of the ubiquinol-cytochrome c oxidoreductase (cytochrome b-c1 complex, complex III, CIII), a multisubunit enzyme composed of 11 subunits. The complex is composed of 3 respiratory subunits cytochrome b, cytochrome c1 and Rieske protein UQCRFS1, 2 core protein subunits UQCRC1/QCR1 and UQCRC2/QCR2, and 6 low-molecular weight protein subunits UQCRH/QCR6, UQCRB/QCR7, UQCRQ/QCR8, UQCR10/QCR9, UQCR11/QCR10 and subunit 9, the cleavage product of Rieske protein UQCRFS1. The complex exists as an obligatory dimer and forms supercomplexes (SCs) in the inner mitochondrial membrane with NADH-ubiquinone oxidoreductase (complex I, CI) and cytochrome c oxidase (complex IV, CIV), resulting in different assemblies (supercomplex SCI(1)III(2)IV(1) and megacomplex MCI(2)III(2)IV(2)). Interacts with STMP1.

Its subcellular location is the mitochondrion inner membrane. Its function is as follows. Component of the ubiquinol-cytochrome c oxidoreductase, a multisubunit transmembrane complex that is part of the mitochondrial electron transport chain which drives oxidative phosphorylation. The respiratory chain contains 3 multisubunit complexes succinate dehydrogenase (complex II, CII), ubiquinol-cytochrome c oxidoreductase (cytochrome b-c1 complex, complex III, CIII) and cytochrome c oxidase (complex IV, CIV), that cooperate to transfer electrons derived from NADH and succinate to molecular oxygen, creating an electrochemical gradient over the inner membrane that drives transmembrane transport and the ATP synthase. The cytochrome b-c1 complex catalyzes electron transfer from ubiquinol to cytochrome c, linking this redox reaction to translocation of protons across the mitochondrial inner membrane, with protons being carried across the membrane as hydrogens on the quinol. In the process called Q cycle, 2 protons are consumed from the matrix, 4 protons are released into the intermembrane space and 2 electrons are passed to cytochrome c. This Homo sapiens (Human) protein is Cytochrome b-c1 complex subunit 9 (UQCR10).